We begin with the raw amino-acid sequence, 243 residues long: Segregation and condensation protein A (243 aa).

It belongs to the ScpA family. As to quaternary structure, component of a cohesin-like complex composed of ScpA, ScpB and the Smc homodimer, in which ScpA and ScpB bind to the head domain of Smc. The presence of the three proteins is required for the association of the complex with DNA.

The protein resides in the cytoplasm. Participates in chromosomal partition during cell division. May act via the formation of a condensin-like complex containing Smc and ScpB that pull DNA away from mid-cell into both cell halves. The chain is Segregation and condensation protein A from Staphylococcus haemolyticus (strain JCSC1435).